The primary structure comprises 352 residues: Chorismate synthase (352 aa).

2 residues coordinate NADP(+): arginine 48 and arginine 54. FMN is bound by residues 125-127, 238-239, glycine 278, 293-297, and arginine 319; these read RSS, NA, and KPTSS.

The protein belongs to the chorismate synthase family. Homotetramer. It depends on FMNH2 as a cofactor.

It catalyses the reaction 5-O-(1-carboxyvinyl)-3-phosphoshikimate = chorismate + phosphate. The protein operates within metabolic intermediate biosynthesis; chorismate biosynthesis; chorismate from D-erythrose 4-phosphate and phosphoenolpyruvate: step 7/7. Its function is as follows. Catalyzes the anti-1,4-elimination of the C-3 phosphate and the C-6 proR hydrogen from 5-enolpyruvylshikimate-3-phosphate (EPSP) to yield chorismate, which is the branch point compound that serves as the starting substrate for the three terminal pathways of aromatic amino acid biosynthesis. This reaction introduces a second double bond into the aromatic ring system. This chain is Chorismate synthase, found in Bordetella petrii (strain ATCC BAA-461 / DSM 12804 / CCUG 43448).